A 694-amino-acid chain; its full sequence is MAGDRAEEEEGEAPPPEARAAAAVERVAAAVEAVAAGAGAGAGEYRNAYRRQLLALSRRIRLLGPFVEELRERRRGEGEGEEEERALAPLADALEAALALLRLGREGSRISLVLERDSVMKKFQGVILQLEQALCDIPYNELDISDEVREQVELVHAQLKRAKERIDMPDDEFYNDLLSVYDKNYDPSAELAILGRLSEKLHLMTITDLTQESLALHEMVASGGGQDPGEHIERMSMLLKKIKDFVQTQNPDMGPPMASRVLDSNGDSRPITIPDEFRCPISLELMKDPVIVSTGQTYERACIEKWIASGHHTCPTTQQKMSTSALTPNYVLRSLISQWCETNGMEPPKRSTQPNKPTPACSSSERANIDALLSKLCSPDTEEQRSAAAELRLLAKRNANNRICIAEAGAIPLLLSLLSSSDLRTQEHAVTALLNLSIHEDNKASIISSGAVPSIVHVLKNGSMEARENAAATLFSLSVIDEYKVTIGGMGAIPALVVLLGEGSQRGKKDAAAALFNLCIYQGNKGRAIRAGLVPLIMGLVTNPTGALMDEAMAILSILSSHPEGKAAIGAAEPVPVLVEMIGSGTPRNRENAAAVMLHLCSGEHHLVHLARAQECGIMVPLRELALNGTDRGKRKAVQLLERMSRFLVQQQEEQESQSQASAQVPPQATPEQVPENDIPEQLDSPASQYPMVV.

Acidic residues predominate over residues 1–12 (MAGDRAEEEEGE). Disordered stretches follow at residues 1-21 (MAGD…ARAA) and 343-363 (NGME…ACSS). One can recognise a U-box domain in the interval 272 to 346 (TIPDEFRCPI…SQWCETNGME (75 aa)). The segment covering 350–363 (RSTQPNKPTPACSS) has biased composition (polar residues). 6 ARM repeats span residues 398 to 438 (NANN…NLSI), 439 to 479 (HEDN…SLSV), 480 to 520 (IDEY…NLCI), 521 to 561 (YQGN…ILSS), 562 to 602 (HPEG…HLCS), and 603 to 650 (GEHH…FLVQ). The segment covering 650-667 (QQQEEQESQSQASAQVPP) has biased composition (low complexity). A disordered region spans residues 650-694 (QQQEEQESQSQASAQVPPQATPEQVPENDIPEQLDSPASQYPMVV).

As to quaternary structure, interacts with SPIN1 (via N-terminus). In terms of tissue distribution, highly expressed in leaf, at intermediate levels in shoot and weakly in root.

It is found in the nucleus. Its subcellular location is the cytoplasm. The enzyme catalyses S-ubiquitinyl-[E2 ubiquitin-conjugating enzyme]-L-cysteine + [acceptor protein]-L-lysine = [E2 ubiquitin-conjugating enzyme]-L-cysteine + N(6)-ubiquitinyl-[acceptor protein]-L-lysine.. The protein operates within protein modification; protein ubiquitination. In terms of biological role, E3 ubiquitin-protein ligase that negatively regulates programmed cell death and disease resistance. Participates in flowering time control by mediating ubiquitination and subsequent proteasomal degradation of SPIN1. This Oryza sativa subsp. japonica (Rice) protein is E3 ubiquitin-protein ligase SPL11 (SPL11).